A 560-amino-acid chain; its full sequence is Phosphoglucomutase 1 (560 aa).

Residues Arg24 and Ser116 each coordinate alpha-D-glucose 1,6-bisphosphate. Ser116 (phosphoserine intermediate) is an active-site residue. Mg(2+)-binding residues include Ser116, Asp288, Asp290, and Asp292. Ser116 carries the phosphoserine modification. Residues Asp292, Arg293, Thr357, Glu376, Ser378, and Lys389 each coordinate alpha-D-glucose 1,6-bisphosphate.

This sequence belongs to the phosphohexose mutase family. As to quaternary structure, monomer. Mg(2+) is required as a cofactor. In terms of tissue distribution, localized primarily to fat bodies in third instar larvae.

The enzyme catalyses alpha-D-glucose 1-phosphate = alpha-D-glucose 6-phosphate. It catalyses the reaction O-phospho-L-seryl-[protein] + alpha-D-glucose 1-phosphate = alpha-D-glucose 1,6-bisphosphate + L-seryl-[protein]. The catalysed reaction is alpha-D-glucose 1,6-bisphosphate + L-seryl-[protein] = O-phospho-L-seryl-[protein] + alpha-D-glucose 6-phosphate. Catalyzes the reversible isomerization of alpha-D-glucose 1-phosphate to alpha-D-glucose 6-phosphate. The mechanism proceeds via the intermediate compound alpha-D-glucose 1,6-bisphosphate. This enzyme participates in both the breakdown and synthesis of glucose. Enzyme of the glycolytic pathway. Glycolysis is essential in glial cells but not in neurons; neurons rely on the citric acid cycle for their energy needs, and on lactate and alanine secreted into the hemolymph by glial cells to fuel it. The sequence is that of Phosphoglucomutase 1 from Drosophila melanogaster (Fruit fly).